We begin with the raw amino-acid sequence, 500 residues long: Type-2 serine--tRNA ligase (500 aa).

Alanine 305 lines the L-serine pocket. Cysteine 307 contacts Zn(2+). Arginine 337 is an L-serine binding site. ATP is bound by residues 337–339 and 348–349; these read RYE and RV. L-serine-binding positions include 354 to 356 and glutamine 401; that span reads RIE. Glutamate 356 is a binding site for Zn(2+). ATP is bound at residue glutamate 430. L-serine is bound at residue asparagine 433. Position 459 (cysteine 459) interacts with Zn(2+). Arginine 466 lines the ATP pocket.

Belongs to the class-II aminoacyl-tRNA synthetase family. Type-2 seryl-tRNA synthetase subfamily. As to quaternary structure, homodimer. Zn(2+) is required as a cofactor.

The protein localises to the cytoplasm. The catalysed reaction is tRNA(Ser) + L-serine + ATP = L-seryl-tRNA(Ser) + AMP + diphosphate + H(+). The enzyme catalyses tRNA(Sec) + L-serine + ATP = L-seryl-tRNA(Sec) + AMP + diphosphate + H(+). Its pathway is aminoacyl-tRNA biosynthesis; selenocysteinyl-tRNA(Sec) biosynthesis; L-seryl-tRNA(Sec) from L-serine and tRNA(Sec): step 1/1. Its function is as follows. Catalyzes the attachment of serine to tRNA(Ser). Is also able to aminoacylate tRNA(Sec) with serine, to form the misacylated tRNA L-seryl-tRNA(Sec), which will be further converted into selenocysteinyl-tRNA(Sec). This is Type-2 serine--tRNA ligase from Methanothrix thermoacetophila (strain DSM 6194 / JCM 14653 / NBRC 101360 / PT) (Methanosaeta thermophila).